The chain runs to 396 residues: Enoyl-[acyl-carrier-protein] reductase [NADH] (396 aa).

NAD(+)-binding positions include 47-52 (GASTGF), 73-74 (FE), 110-111 (DA), and 138-139 (LA). Tyr-224 is a substrate binding site. The Proton donor role is filled by Tyr-234. Residues Lys-243 and 272–274 (LVT) contribute to the NAD(+) site.

The protein belongs to the TER reductase family. As to quaternary structure, monomer.

The enzyme catalyses a 2,3-saturated acyl-[ACP] + NAD(+) = a (2E)-enoyl-[ACP] + NADH + H(+). The protein operates within lipid metabolism; fatty acid biosynthesis. Its function is as follows. Involved in the final reduction of the elongation cycle of fatty acid synthesis (FAS II). Catalyzes the reduction of a carbon-carbon double bond in an enoyl moiety that is covalently linked to an acyl carrier protein (ACP). The protein is Enoyl-[acyl-carrier-protein] reductase [NADH] of Flavobacterium johnsoniae (strain ATCC 17061 / DSM 2064 / JCM 8514 / BCRC 14874 / CCUG 350202 / NBRC 14942 / NCIMB 11054 / UW101) (Cytophaga johnsonae).